We begin with the raw amino-acid sequence, 1092 residues long: NAD-specific glutamate dehydrogenase (1092 aa).

Lysine 626 is an active-site residue.

Belongs to the Glu/Leu/Phe/Val dehydrogenases family. In terms of assembly, homotetramer. Interacts with NNK1. Post-translationally, phosphorylated by a complex containing the NNK1 kinase.

It carries out the reaction L-glutamate + NAD(+) + H2O = 2-oxoglutarate + NH4(+) + NADH + H(+). NAD(+)-dependent glutamate dehydrogenase which degrades glutamate to ammonia and alpha-ketoglutarate. In Saccharomyces cerevisiae (strain ATCC 204508 / S288c) (Baker's yeast), this protein is NAD-specific glutamate dehydrogenase (GDH2).